The primary structure comprises 157 residues: Putative glutathione-dependent formaldehyde-activating enzyme (157 aa).

Residues L3 to D134 form the CENP-V/GFA domain. The Zn(2+) site is built by C7, C9, C27, C29, C32, C79, and C82.

It belongs to the Gfa family. The cofactor is Zn(2+).

The enzyme catalyses S-(hydroxymethyl)glutathione = glutathione + formaldehyde. The protein operates within one-carbon metabolism; formaldehyde degradation; formate from formaldehyde (glutathione route): step 1/3. In terms of biological role, catalyzes the condensation of formaldehyde and glutathione to S-hydroxymethylglutathione. This Halomonas elongata (strain ATCC 33173 / DSM 2581 / NBRC 15536 / NCIMB 2198 / 1H9) protein is Putative glutathione-dependent formaldehyde-activating enzyme.